A 363-amino-acid chain; its full sequence is Cyclin-D1-1 (363 aa).

The disordered stretch occupies residues 39–77; the sequence is ELEREGEPAQGSSPSSSLSCAAAAAAAADDDDEDEDEHG. Residues 50–65 show a composition bias toward low complexity; it reads SSPSSSLSCAAAAAAA. Over residues 66–75 the composition is skewed to acidic residues; sequence ADDDDEDEDE.

Belongs to the cyclin family. Cyclin D subfamily.

The chain is Cyclin-D1-1 (CYCD1-1) from Oryza sativa subsp. japonica (Rice).